We begin with the raw amino-acid sequence, 349 residues long: Glycerol-1-phosphate dehydrogenase [NAD(P)+] (349 aa).

NAD(+)-binding positions include 95–99 and 117–120; these read GKSID and TSPS. Position 122 (Asp-122) interacts with substrate. Residue Ser-126 participates in NAD(+) binding. Asp-169 is a substrate binding site. Asp-169 and His-249 together coordinate Zn(2+). Residue His-253 participates in substrate binding. His-265 provides a ligand contact to Zn(2+).

It belongs to the glycerol-1-phosphate dehydrogenase family. Homodimer. It depends on Zn(2+) as a cofactor.

Its subcellular location is the cytoplasm. The catalysed reaction is sn-glycerol 1-phosphate + NAD(+) = dihydroxyacetone phosphate + NADH + H(+). The enzyme catalyses sn-glycerol 1-phosphate + NADP(+) = dihydroxyacetone phosphate + NADPH + H(+). Its pathway is membrane lipid metabolism; glycerophospholipid metabolism. Functionally, catalyzes the NAD(P)H-dependent reduction of dihydroxyacetonephosphate (DHAP or glycerone phosphate) to glycerol 1-phosphate (G1P). The G1P thus generated is used as the glycerophosphate backbone of phospholipids in the cellular membranes of Archaea. In Hyperthermus butylicus (strain DSM 5456 / JCM 9403 / PLM1-5), this protein is Glycerol-1-phosphate dehydrogenase [NAD(P)+].